The chain runs to 268 residues: MVYPEEPFWVLPTVTGFYEDRDYRVNVVEALQEFWQMKQSRGAELKNGALVIYESIPSNSQPYICFVTLPGGSCFGSFQNCPTKAEARRSSAKIALMNSVFNEHPSRRISDEFIQKAVQDARTSFKGTSQINEGTESGIGAFRFMLEANKGRTMLEFQELMTVFQLLHWNGSLKAMRERHCSRQEVVAHYSNRSLDDEMRSQMALDWIAREHDNPGVIRRELVLAERELETFRMAGRELRFPKEKKDILMIAHNQLGGSALNSATIDD.

Belongs to the LIX1 family. Interacts with ft (via intracellular domain) and ds (via intracellular domain).

It is found in the apical cell membrane. Its subcellular location is the cytoplasm. Component of the Fat (ft) signaling pathway that functions in normal development of various organs such as the wing and leg. In developing imaginal disks, involved in regulating both the protein levels and apical localization of ft and ds. Involved in establishing planar cell polarity (PCP) along the anterior-posterior axis of the wing (the early Fz signaling event), probably by acting upstream of ds and ft to regulate Fz activity. This Drosophila melanogaster (Fruit fly) protein is Protein limb expression 1 homolog.